Consider the following 910-residue polypeptide: DNA mismatch repair protein MutS (910 aa).

Positions 1–11 are enriched in basic and acidic residues; the sequence is MEAKVEEKEPE. The tract at residues 1–21 is disordered; it reads MEAKVEEKEPEPVENAGPDAP. 658-665 provides a ligand contact to ATP; the sequence is GPNMGGKS.

It belongs to the DNA mismatch repair MutS family.

Its function is as follows. This protein is involved in the repair of mismatches in DNA. It is possible that it carries out the mismatch recognition step. This protein has a weak ATPase activity. In Brucella canis (strain ATCC 23365 / NCTC 10854 / RM-666), this protein is DNA mismatch repair protein MutS.